A 320-amino-acid polypeptide reads, in one-letter code: Ribosomal protein L11 methyltransferase (320 aa).

S-adenosyl-L-methionine is bound by residues threonine 165, glycine 186, aspartate 208, and asparagine 251.

The protein belongs to the methyltransferase superfamily. PrmA family.

The protein localises to the cytoplasm. It catalyses the reaction L-lysyl-[protein] + 3 S-adenosyl-L-methionine = N(6),N(6),N(6)-trimethyl-L-lysyl-[protein] + 3 S-adenosyl-L-homocysteine + 3 H(+). Its function is as follows. Methylates ribosomal protein L11. This Limosilactobacillus fermentum (strain NBRC 3956 / LMG 18251) (Lactobacillus fermentum) protein is Ribosomal protein L11 methyltransferase.